A 551-amino-acid polypeptide reads, in one-letter code: uncharacterized protein (551 aa).

Residues 1–36 constitute a mitochondrion transit peptide; the sequence is MMALVRDRRAHYVMSIVIRWVHCFSSSLRGTFGTRW. Positions 203 to 315 form a coiled coil; the sequence is TNILLRKLKE…MDSRDRLREE (113 aa). A disordered region spans residues 354 to 389; sequence REASLSPWPKSPPSTTALRPHSATMSVSSAGAQKAK. A compositionally biased stretch (polar residues) spans 366 to 384; that stretch reads PSTTALRPHSATMSVSSAG. Positions 405–439 form a coiled coil; the sequence is KHGLESQIEALKANLENEKKKVERFRKEADRLNKS. A disordered region spans residues 519–551; that stretch reads LQLSPKGKLSESPKEESLEEPSMRQSSPAETVD. Polar residues predominate over residues 541 to 551; that stretch reads MRQSSPAETVD.

Interacts with NOD2.

Its subcellular location is the mitochondrion. This is an uncharacterized protein from Homo sapiens (Human).